The sequence spans 216 residues: Small ribosomal subunit protein uS3 (216 aa).

Positions 20–91 constitute a KH type-2 domain; sequence LKEFFEKALV…SVEIVVEKVH (72 aa).

This sequence belongs to the universal ribosomal protein uS3 family.

This Encephalitozoon cuniculi (strain GB-M1) (Microsporidian parasite) protein is Small ribosomal subunit protein uS3 (RPS3).